A 795-amino-acid polypeptide reads, in one-letter code: Plakophilin-2 (795 aa).

Residues 1–318 (MAVPGSLAEC…MTLERAVNML (318 aa)) are required for binding to single-stranded DNA. Ser44 carries the phosphoserine modification. Position 46 is an omega-N-methylarginine (Arg46). Residues Ser82, Ser132, Ser135, Ser151, Ser154, Ser155, Ser172, Ser188, and Ser232 each carry the phosphoserine modification. Disordered regions lie at residues 197 to 233 (GTAR…SHSA) and 245 to 274 (SQAR…REPG). Residues 245 to 257 (SQARLQSTQSRTA) are compositionally biased toward polar residues. A compositionally biased stretch (low complexity) spans 258-268 (RSSWPRSSVRS). Phosphoserine is present on residues Ser265 and Ser287. 8 ARM repeats span residues 299–339 (DAQL…QHES), 343–382 (SEAR…NLVF), 385–425 (NDNK…NLSS), 484–530 (PDGR…NLSY), 585–625 (PHGI…NLTA), 633–672 (LVAR…NLSR), 677–718 (QNEI…NLMQ), and 721–763 (YQNA…SLWA).

The protein belongs to the beta-catenin family. In terms of assembly, interacts with DSC2. Interacts with JUP. Interacts with KRT5/CK5, KRT8/CK8, KRT14/CK14, KRT18/CK18 and VIM. Interacts (via N-terminus) with MARK3/C-TAK1. Interacts with DSP. Interacts with DSG1, DSG2 and DSG3. Interacts (via N-terminus) with CTNNB1. Interacts with CDH1. Interacts with the RNA polymerase III (Pol III) complex proteins POLR3A/RPC155, POLR3F/RPC39 and POLR3C/RPC82. Interacts with CTNNA3. Interacts (via N-terminus) with SCN5A/Nav1.5. Interacts with ANK3/ANKG and GJA1/CX43. Expressed in cardiomyocytes in the heart (at protein level).

Its subcellular location is the nucleus. It is found in the cell junction. The protein resides in the desmosome. The protein localises to the cytoplasm. Its function is as follows. A component of desmosome cell-cell junctions which are required for positive regulation of cellular adhesion. Regulates focal adhesion turnover resulting in changes in focal adhesion size, cell adhesion and cell spreading, potentially via transcriptional modulation of beta-integrins. Required to maintain gingival epithelial barrier function. Important component of the desmosome that is also required for localization of desmosome component proteins such as DSC2, DSG2 and JUP to the desmosome cell-cell junction. Required for the formation of desmosome cell junctions in cardiomyocytes, thereby required for the correct formation of the heart, specifically trabeculation and formation of the atria walls. Loss of desmosome cell junctions leads to mis-localization of DSP and DSG2 resulting in disruption of cell-cell adhesion and disordered intermediate filaments. Modulates profibrotic gene expression in cardiomyocytes via regulation of DSP expression and subsequent activation of downstream TGFB1 and MAPK14/p38 MAPK signaling. Required for cardiac sodium current propagation and electrical synchrony in cardiac myocytes, via ANK3 stabilization and modulation of SCN5A/Nav1.5 localization to cell-cell junctions. Required for mitochondrial function, nuclear envelope integrity and positive regulation of SIRT3 transcription via maintaining DES localization at its nuclear envelope and cell tip anchoring points, and thereby preserving regulation of the transcriptional program. Maintenance of nuclear envelope integrity protects against DNA damage and transcriptional dysregulation of genes, especially those involved in the electron transport chain, thereby preserving mitochondrial function and protecting against superoxide radical anion generation. Binds single-stranded DNA (ssDNA). May regulate the localization of GJA1 to gap junctions in intercalated disks of the heart. This Mus musculus (Mouse) protein is Plakophilin-2.